A 60-amino-acid chain; its full sequence is MIIFLILVLLSTIIFADKVKTDNETHSWKSEITEQVQVAPKSAATCEVTFKGSTAGNQSF.

This is an uncharacterized protein from Thermotoga maritima (strain ATCC 43589 / DSM 3109 / JCM 10099 / NBRC 100826 / MSB8).